We begin with the raw amino-acid sequence, 363 residues long: Spermatogenesis-associated protein 22 (363 aa).

Composition is skewed to polar residues over residues 1–12 (MKRSLNENSARS) and 145–157 (SCPM…QQKQ). Disordered regions lie at residues 1 to 51 (MKRS…DNYD) and 145 to 169 (SCPM…LPRN).

Component of a multiprotein complex with MEIOB and RPA2. Interacts with MEIOB. Interacts with the complex BRME1:HSF2BP:BRCA2. Expressed in testis.

The protein localises to the chromosome. Its function is as follows. Meiosis-specific protein required for homologous recombination in meiosis I. This chain is Spermatogenesis-associated protein 22 (SPATA22), found in Macaca fascicularis (Crab-eating macaque).